The following is a 565-amino-acid chain: MGDNGDNKELKQKLNFSYSEEEQEDEGQKEAQESKKVQYHTPERCGHQDSEAKFTPPRTPLNHVCELSTPQVKDRASPDQGLRTPVSRPHTRPETPAPPDKSKPPPHCESPFTPRGHSSQSVISTGKLPSRGSKHLRLTPGPLTDEMTSLALVNINPFTPESYRRQFLKSNGKRKTRRDLEEAGPEEGKVEKGLPAKRCVLRETNMACRYEKEFLEVEKIGVGEFGTVYKCIKRLDGCVYAIKRSTKPVSGLSDENLAMHEVYAHSVLGHHPHVVRYYSSWAEDDHMMIQNEYCNGGSLQAAISENAKSGNHFQEPKLKDILLQISLGLKYIHNYGMVHMDIKPSNIFICHKIPSDSPVVPEEAENEADWFLSANVTYKIGDLGHVTSISEPQVEEGDSRFLAKEILQENYQHLPKADIFALGLTIAVAAGAEALPTNGTSWHHIREGQLPNIPQDLSKEFYNLLKDMIDPDPVARPSAAALTRSRVLCPSLGRTEELQQQLNLEKFKTATLERELKEVQRAQSSKEGQSSPGVTGTHTGSRSTRRLVGGKSAKSSSFTWGQSSP.

Basic and acidic residues-rich tracts occupy residues 1-12 and 26-52; these read MGDNGDNKELKQ and EGQK…DSEA. 2 disordered regions span residues 1 to 142 and 169 to 189; these read MGDN…TPGP and KSNG…EEGK. Residue serine 77 is modified to Phosphoserine. The short motif at 173 to 175 is the Nuclear localization signal element; it reads KRK. Positions 178–189 are enriched in basic and acidic residues; sequence RDLEEAGPEEGK. The Protein kinase domain maps to 214 to 492; sequence FLEVEKIGVG…TRSRVLCPSL (279 aa). Residues 220-228 and lysine 243 contribute to the ATP site; that span reads IGVGEFGTV. A Nuclear export signal motif is present at residues 317–331; sequence KLKDILLQISLGLKY. The Proton acceptor role is filled by aspartate 341. Positions 346 and 382 each coordinate Mg(2+). Positions 495-521 form a coiled coil; the sequence is TEELQQQLNLEKFKTATLERELKEVQR. Residues 518–565 form a disordered region; that stretch reads EVQRAQSSKEGQSSPGVTGTHTGSRSTRRLVGGKSAKSSSFTWGQSSP. 2 stretches are compositionally biased toward polar residues: residues 521–534 and 553–565; these read RAQS…SPGV and AKSS…QSSP.

The protein belongs to the protein kinase superfamily. Ser/Thr protein kinase family. WEE1 subfamily. In terms of processing, phosphorylation leads to increase its activity. Ovary-specific.

The protein resides in the nucleus. The catalysed reaction is L-tyrosyl-[protein] + ATP = O-phospho-L-tyrosyl-[protein] + ADP + H(+). Oocyte-specific protein tyrosine kinase that phosphorylates and inhibits CDK1 and acts as a key regulator of meiosis during both prophase I and metaphase II. Required to maintain meiotic arrest in oocytes during the germinal vesicle (GV) stage, a long period of quiescence at dictyate prophase I, by phosphorylating CDK1 at 'Tyr-15', leading to inhibit CDK1 activity and prevent meiotic reentry. Also required for metaphase II exit during egg activation by phosphorylating CDK1 at 'Tyr-15', to ensure exit from meiosis in oocytes and promote pronuclear formation. The protein is Wee1-like protein kinase 2 (WEE2) of Sus scrofa (Pig).